The following is an 810-amino-acid chain: RING finger protein unkempt homolog (810 aa).

The segment at 1 to 24 is disordered; the sequence is MSKGPGPGGSAASSAPPAATAQVL. Residues 10–19 are compositionally biased toward low complexity; the sequence is SAASSAPPAA. 5 C3H1-type zinc fingers span residues 84 to 113, 124 to 154, 215 to 241, 251 to 285, and 293 to 321; these read YSPD…HRTT, YYKT…HGPH, NYKT…HNSK, KYRS…HTRT, and IYKS…HVEQ. The tract at residues 239-265 is disordered; it reads NSKDRRRSPRKHKYRSSPCPNVKHGDE. A Phosphoserine modification is found at serine 240. Residues 241-253 are compositionally biased toward basic residues; that stretch reads KDRRRSPRKHKYR. The interval 324-343 is disordered; that stretch reads LSDDLQPSSTVSSPTQPGPV. Over residues 329–343 the composition is skewed to low complexity; it reads QPSSTVSSPTQPGPV. A phosphoserine mark is found at serine 374, serine 378, and serine 385. Positions 569-585 are enriched in low complexity; it reads SASFHSASPSPPVSLSS. The disordered stretch occupies residues 569–602; sequence SASFHSASPSPPVSLSSHFLQQPQGHLSQSENTF. Residues 586–602 show a composition bias toward polar residues; that stretch reads HFLQQPQGHLSQSENTF. Serine 631 bears the Phosphoserine mark. Positions 643 to 723 form a coiled coil; the sequence is GAAELARLRQ…QEELERLHSG (81 aa). The RING-type; degenerate zinc-finger motif lies at 766-801; it reads SVKCLKCQEQNRAVLPCQHAVLCELCAEGSECPVCQ.

Belongs to the unkempt family.

Its subcellular location is the cytoplasm. Its function is as follows. Sequence-specific RNA-binding protein which plays an important role in the establishment and maintenance of the early morphology of cortical neurons during embryonic development. Acts as a translation repressor and controls a translationally regulated cell morphology program to ensure proper structuring of the nervous system. Translational control depends on recognition of its binding element within target mRNAs which consists of a mandatory UAG trimer upstream of a U/A-rich motif. Associated with polysomes. The sequence is that of RING finger protein unkempt homolog (UNK) from Canis lupus familiaris (Dog).